The chain runs to 246 residues: Ribosomal RNA small subunit methyltransferase G (246 aa).

Residues Gly81, Phe86, 137–138 (AE), and Arg156 each bind S-adenosyl-L-methionine. A disordered region spans residues 221–246 (LVLIRKERPTPKAYPRRAGVPAKSPL).

It belongs to the methyltransferase superfamily. RNA methyltransferase RsmG family.

It is found in the cytoplasm. Specifically methylates the N7 position of a guanine in 16S rRNA. The polypeptide is Ribosomal RNA small subunit methyltransferase G (Symbiobacterium thermophilum (strain DSM 24528 / JCM 14929 / IAM 14863 / T)).